Reading from the N-terminus, the 419-residue chain is NF-kappa-B essential modulator (419 aa).

The tract at residues 1-48 (MSRPPWKSPLCEMVQPSGSPAGDQDMLGEESSLGKPAMLHVPSEQGTP) is disordered. The tract at residues 1-197 (MSRPPWKSPL…REALEQRHSV (197 aa)) is required for interaction with and ubiquitination by MARCHF2. Phosphoserine; by IKKB is present on residues Ser-31 and Ser-43. An interaction with CHUK/IKBKB region spans residues 44–111 (EQGTPETFQR…DLVVRLSLEK (68 aa)). Positions 49-353 (ETFQRCLEEN…KTSCQESARI (305 aa)) form a coiled coil. Ser-68 carries the post-translational modification Phosphoserine. Residues Lys-111, Lys-139, Lys-143, Lys-226, Lys-246, and Lys-264 each participate in a glycyl lysine isopeptide (Lys-Gly) (interchain with G-Cter in ubiquitin) cross-link. Positions 150–257 (LGELQESQSR…SMVSSERNRG (108 aa)) are interaction with TANK. Residues 242–350 (DNHMKSSMVS…SRLKTSCQES (109 aa)) form a ubiquitin-binding (UBAN) region. Residues 246-365 (KSSMVSSERN…MRKRHVEVSQ (120 aa)) are self-association. Residues 251 to 419 (SSERNRGLQL…LQIHVMECIE (169 aa)) form a required for interaction with TNFAIP3 region. Residue Lys-277 forms a Glycyl lysine isopeptide (Lys-Gly) (interchain with G-Cter in SUMO); alternate linkage. A Glycyl lysine isopeptide (Lys-Gly) (interchain with G-Cter in ubiquitin); alternate cross-link involves residue Lys-277. Residues Lys-283, Lys-285, Lys-292, and Lys-302 each participate in a glycyl lysine isopeptide (Lys-Gly) (interchain with G-Cter in ubiquitin) cross-link. Residue Lys-309 forms a Glycyl lysine isopeptide (Lys-Gly) (interchain with G-Cter in SUMO); alternate linkage. Lys-309 is covalently cross-linked (Glycyl lysine isopeptide (Lys-Gly) (interchain with G-Cter in ubiquitin); alternate). Residues Lys-321, Lys-325, and Lys-326 each participate in a glycyl lysine isopeptide (Lys-Gly) (interchain with G-Cter in ubiquitin) cross-link. Positions 322–343 (LAEKKEFLQEQLEQLQREYSRL) are leucine-zipper. The disordered stretch occupies residues 356–394 (MRKRHVEVSQPPLAPGPAHHSFHLNPSSQRRSPPDEPPK). A Phosphoserine; by IKKB modification is found at Ser-376. The tract at residues 382–419 (SSQRRSPPDEPPKFCCPKCQYQAPDIDTLQIHVMECIE) is interaction with CYLD. A Phosphoserine modification is found at Ser-387. A CCHC NOA-type zinc finger spans residues 389 to 419 (PDEPPKFCCPKCQYQAPDIDTLQIHVMECIE). Residue Cys-397 coordinates Zn(2+). Residue Lys-399 forms a Glycyl lysine isopeptide (Lys-Gly) (interchain with G-Cter in ubiquitin) linkage. Zn(2+)-binding residues include Cys-400, His-413, and Cys-417.

Homodimer; disulfide-linked. Component of the I-kappa-B-kinase (IKK) core complex consisting of CHUK, IKBKB and IKBKG; probably four alpha/CHUK-beta/IKBKB dimers are associated with four gamma/IKBKG subunits. The IKK core complex seems to associate with regulatory or adapter proteins to form a IKK-signalosome holo-complex. The IKK complex associates with TERF2IP/RAP1, leading to promote IKK-mediated phosphorylation of RELA/p65. Part of a complex composed of NCOA2, NCOA3, CHUK/IKKA, IKBKB, IKBKG and CREBBP. Interacts with COPS3, CYLD, NALP2, TRPC4AP and PIDD1. Interacts with ATM; the complex is exported from the nucleus. Interacts with TRAF6. Interacts with IKBKE. Interacts with TANK; the interaction is enhanced by IKBKE and TBK1. Part of a ternary complex consisting of TANK, IKBKB and IKBKG. Interacts with ZFAND5. Interacts with RIPK2. Interacts with TNIP1 and TNFAIP3; TNIP1 facilitates the TNFAIP3-mediated de-ubiquitination of IKBKG. Interacts with TNFAIP3; the interaction is induced by TNF stimulation and by polyubiquitin. Binds (via UBAN region) polyubiquitin; binds both 'Lys-63'-linked and linear polyubiquitin, with higher affinity for linear ubiquitin. Interacts with NLRP10. Interacts with TANK; this interaction increases in response to DNA damage. Interacts with USP10; this interaction increases in response to DNA damage. Interacts with ZC3H12A; this interaction increases in response to DNA damage. Interacts with IFIT5; the interaction synergizes the recruitment of IKK to MAP3K7 and enhances IKK phosphorylation. Interacts with TRIM29; this interaction induces IKBKG/NEMO ubiquitination and proteolytic degradation. Interacts with TRIM13; this interaction leads to IKBKG/NEMO ubiquitination. Interacts with ARFIP2. Interacts with RIPK1. Interacts with (ubiquitinated) BCL10; interaction with polyubiquitinated BCL10 via both 'Lys-63'-linked and linear ubiquitin is required for TCR-induced NF-kappa-B activation. Interacts with MARCHF2; during the late stages of macrophage viral and bacterial infection; the interaction leads to ubiquitination and degradation of IKBKG/NEMO. Post-translationally, phosphorylation at Ser-68 attenuates aminoterminal homodimerization. Polyubiquitinated on Lys-285 through 'Lys-63'; the ubiquitination is mediated downstream of NOD2 and RIPK2 and probably plays a role in signaling by facilitating interactions with ubiquitin domain-containing proteins and activates the NF-kappa-B pathway. Polyubiquitinated on Lys-399 through 'Lys-63'; the ubiquitination is mediated by BCL10, MALT1 and TRAF6 and probably plays a role in signaling by facilitating interactions with ubiquitin domain-containing proteins and activates the NF-kappa-B pathway. Monoubiquitinated on Lys-277 and Lys-309; promotes nuclear export. Polyubiquitinated through 'Lys-27' by TRIM23; involved in antiviral innate and inflammatory responses. Linear polyubiquitinated on Lys-111, Lys-143, Lys-226, Lys-246, Lys-264, Lys-277, Lys-285, Lys-292, Lys-302, Lys-309 and Lys-326; the head-to-tail polyubiquitination is mediated by the LUBAC complex and plays a key role in NF-kappa-B activation. Deubiquitinated by USP10 in a TANK-dependent and -independent manner, leading to the negative regulation of NF-kappa-B signaling upon DNA damage. Ubiquitinated at Lys-326 by MARCHF2 following bacterial and viral infection which leads to its degradation. Polyubiquitinated via 'Lys-29'-linked ubiquitin; leading to lysosomal degradation. In terms of processing, sumoylated on Lys-277 and Lys-309 with SUMO1. Post-translationally, neddylated by TRIM40, resulting in stabilization of NFKBIA and down-regulation of NF-kappa-B activity.

The protein localises to the cytoplasm. Its subcellular location is the nucleus. Functionally, regulatory subunit of the IKK core complex which phosphorylates inhibitors of NF-kappa-B thus leading to the dissociation of the inhibitor/NF-kappa-B complex and ultimately the degradation of the inhibitor. Its binding to scaffolding polyubiquitin plays a key role in IKK activation by multiple signaling receptor pathways. Can recognize and bind both 'Lys-63'-linked and linear polyubiquitin upon cell stimulation, with a much highr affinity for linear polyubiquitin. Could be implicated in NF-kappa-B-mediated protection from cytokine toxicity. Essential for viral activation of IRF3. Involved in TLR3- and IFIH1-mediated antiviral innate response; this function requires 'Lys-27'-linked polyubiquitination. This is NF-kappa-B essential modulator (IKBKG) from Bos taurus (Bovine).